Here is a 226-residue protein sequence, read N- to C-terminus: Myosin regulatory light chain 10 (226 aa).

3 EF-hand domains span residues 84–119, 154–189, and 190–225; these read NSPA…LGRI, DPEE…QADR, and FSEE…GEEK. Ca(2+) is bound by residues D97, N99, D101, and D108.

As to quaternary structure, myosin is a hexamer of 2 heavy chains and 4 light chains.

In Homo sapiens (Human), this protein is Myosin regulatory light chain 10 (MYL10).